A 289-amino-acid chain; its full sequence is ATP synthase gamma chain (289 aa).

This sequence belongs to the ATPase gamma chain family. In terms of assembly, F-type ATPases have 2 components, CF(1) - the catalytic core - and CF(0) - the membrane proton channel. CF(1) has five subunits: alpha(3), beta(3), gamma(1), delta(1), epsilon(1). CF(0) has three main subunits: a, b and c.

It localises to the cell inner membrane. Produces ATP from ADP in the presence of a proton gradient across the membrane. The gamma chain is believed to be important in regulating ATPase activity and the flow of protons through the CF(0) complex. The chain is ATP synthase gamma chain from Acinetobacter baumannii (strain AB307-0294).